The primary structure comprises 159 residues: NAD(P)H-quinone oxidoreductase subunit J, chloroplastic (159 aa).

The protein belongs to the complex I 30 kDa subunit family. In terms of assembly, NDH is composed of at least 16 different subunits, 5 of which are encoded in the nucleus.

It localises to the plastid. Its subcellular location is the chloroplast thylakoid membrane. It catalyses the reaction a plastoquinone + NADH + (n+1) H(+)(in) = a plastoquinol + NAD(+) + n H(+)(out). It carries out the reaction a plastoquinone + NADPH + (n+1) H(+)(in) = a plastoquinol + NADP(+) + n H(+)(out). NDH shuttles electrons from NAD(P)H:plastoquinone, via FMN and iron-sulfur (Fe-S) centers, to quinones in the photosynthetic chain and possibly in a chloroplast respiratory chain. The immediate electron acceptor for the enzyme in this species is believed to be plastoquinone. Couples the redox reaction to proton translocation, and thus conserves the redox energy in a proton gradient. In Oryza nivara (Indian wild rice), this protein is NAD(P)H-quinone oxidoreductase subunit J, chloroplastic.